A 436-amino-acid chain; its full sequence is MSAEEDLIDYSDEELNTNETAAPAADSNGKKGELAAGGNVDKKGSYVGIHSTGFRDFLLKPELLRAIGDCGFEHPSEVQQTCIPQAMLGGDIICQAKSGLGKTAVFVLTTLQQVEPVAGECSVLVMCHTRELAFQIRNEYNRFSKYMPDIKTGVFFGGTPIQKDAELLKNKETHPHIIVGTPGRLNALVRDKFLRLSSVRIFVLDECDKMLDQIDMRRDVQEIFRATPQQKQVMMFSATLSDEIKPICKKFMQNPTEHYVDEDTKLTLHGLQQYFVALEEKEKNRKLNELLDDLQFNQVIIFVKSTLRATELDKLLRECNFPSIAVHSGVSQEERIRRYKEFKEFNKRICVATDVFGRGIDIERINLAINYDMPADADSYLHRVGRAGRFGTKGLAVSFVTNDQDKEVLTAIEKRFEVPIPEFPKDGIDASTYMAS.

Acidic residues predominate over residues Met1 to Asn16. The segment at Met1–Glu33 is disordered. Residues Thr52–Gln80 carry the Q motif motif. The Helicase ATP-binding domain occupies Ile83–His258. Ala96–Thr103 provides a ligand contact to ATP. The DEAD box signature appears at Asp205–Asp208. Residues Gly270–Ser431 enclose the Helicase C-terminal domain.

This sequence belongs to the DEAD box helicase family. DECD subfamily.

Its subcellular location is the nucleus. It carries out the reaction ATP + H2O = ADP + phosphate + H(+). Functionally, ATP-binding RNA helicase involved in transcription elongation and required for the export of mRNA out of the nucleus. SUB2 also plays a role in pre-mRNA splicing and spliceosome assembly. May be involved in rDNA and telomeric silencing, and maintenance of genome integrity. The sequence is that of ATP-dependent RNA helicase SUB2 (SUB2) from Pyricularia oryzae (strain 70-15 / ATCC MYA-4617 / FGSC 8958) (Rice blast fungus).